The primary structure comprises 1829 residues: Protein let-418 (1829 aa).

2 stretches are compositionally biased toward acidic residues: residues 1-17 (MSTE…ESME) and 25-39 (ATEE…EQGD). 2 disordered regions span residues 1–81 (MSTE…YNST) and 147–198 (MAAQ…SDQE). Residues 48-63 (RSSRKKGGKGGKKGSK) are compositionally biased toward basic residues. 2 consecutive PHD-type zinc fingers follow at residues 256 to 303 (NDYC…CIEH) and 317 to 365 (DEFC…CETV). Chromo domains are found at residues 401–458 (LKPP…PPEF) and 489–550 (MQIH…NEDI). The Helicase ATP-binding domain occupies 614–798 (RHCWSNGTDA…FHLLNFLSKE (185 aa)). An ATP-binding site is contributed by 627 to 634 (DEMGLGKT). The DEAH box motif lies at 749 to 752 (DEAH). The Helicase C-terminal domain occupies 930 to 1093 (LLQKMLRKLK…GKTMSKTELD (164 aa)). Disordered regions lie at residues 1168 to 1198 (ASYQ…EPDP), 1234 to 1289 (SENM…MPPL), 1415 to 1495 (AANG…ARPS), and 1745 to 1829 (NGER…PMET). The span at 1177–1186 (GQEEEEEEET) shows a compositional bias: acidic residues. 2 stretches are compositionally biased toward polar residues: residues 1234–1247 (SENM…QNQT) and 1418–1427 (GSAQGSSRST). Basic and acidic residues predominate over residues 1429–1444 (KPKEEPKEEPMEKEDA). Residues 1446-1455 (ETVNGATSEP) show a composition bias toward polar residues. The span at 1474–1490 (DEAKEPKEEPIETEKPR) shows a compositional bias: basic and acidic residues. Residues 1749–1773 (MEEDEPVEAEEEEGVKQEPDDETQD) show a composition bias toward acidic residues. The segment covering 1792–1811 (DVPSTSAAAAVSSETAADAE) has biased composition (low complexity). Residues 1819–1829 (APTDEPEPMET) show a composition bias toward acidic residues.

As to quaternary structure, component of the MEC (MEP-1-containing complex) complex that contains let-418, mep-1 and hda-1. Component of a NURD complex that contains let-418, hda-1, lin-40 and lin-53. Interacts with lin-1. Interacts with pie-1. Interacts with akir-1. Expressed in embryos and larva.

It localises to the nucleus. Functionally, part of a NuRD (Nucleosome Remodeling and Deacetylase) complex which is implicated in the synMuv B pathway that negatively regulates specification of vulval cell fate. This negative regulation is thought to be mediated via interaction with the promoter of lin-39, a key regulator in vulva development, and is dependent on the presence lin-1. Contributes to negative regulation of lag-2 which is expressed in the gut during larval development. Has a broad role in development. In association with akir-1, plays a role in regulating the transcription of antimicrobial peptide genes in response to fungal infection. The sequence is that of Protein let-418 from Caenorhabditis elegans.